The chain runs to 324 residues: Acetyl-coenzyme A carboxylase carboxyl transferase subunit alpha (324 aa).

Residues 37–291 enclose the CoA carboxyltransferase C-terminal domain; sequence KLDKRLDRLK…QEYVLQEWVK (255 aa).

The protein belongs to the AccA family. As to quaternary structure, acetyl-CoA carboxylase is a heterohexamer composed of biotin carboxyl carrier protein (AccB), biotin carboxylase (AccC) and two subunits each of ACCase subunit alpha (AccA) and ACCase subunit beta (AccD).

It localises to the cytoplasm. The enzyme catalyses N(6)-carboxybiotinyl-L-lysyl-[protein] + acetyl-CoA = N(6)-biotinyl-L-lysyl-[protein] + malonyl-CoA. Its pathway is lipid metabolism; malonyl-CoA biosynthesis; malonyl-CoA from acetyl-CoA: step 1/1. Its function is as follows. Component of the acetyl coenzyme A carboxylase (ACC) complex. First, biotin carboxylase catalyzes the carboxylation of biotin on its carrier protein (BCCP) and then the CO(2) group is transferred by the carboxyltransferase to acetyl-CoA to form malonyl-CoA. This chain is Acetyl-coenzyme A carboxylase carboxyl transferase subunit alpha, found in Chlamydia trachomatis serovar L2 (strain ATCC VR-902B / DSM 19102 / 434/Bu).